Here is a 166-residue protein sequence, read N- to C-terminus: MFSRQFGRLATLALALAVAGCAGGEQSTTAEAPSEPAPVAKPDVVSAATGELSNFSTADLKQAKKLFQAECGRCHVGGQTYGTYNSTDVSLSYDALTNATPPRNTVAGLVDYMKKPTSYDGRTDLLKTGEHASFTGLGDEKLRLIAGHIIKEATSNPNWGQGKDTR.

An N-terminal signal peptide occupies residues 1-32; the sequence is MFSRQFGRLATLALALAVAGCAGGEQSTTAEA. The heme c site is built by cysteine 71, cysteine 74, and histidine 75.

Belongs to the cytochrome c family. PsbV subfamily. It depends on heme c as a cofactor.

The protein localises to the cell inner membrane. Probable low-potential cytochrome c, might function in photosystem II (PSII). The chain is Cytochrome c-550 2 (psbV2) from Gloeobacter violaceus (strain ATCC 29082 / PCC 7421).